The chain runs to 213 residues: Redox-sensing transcriptional repressor Rex (213 aa).

Positions Leu-17 to Phe-56 form a DNA-binding region, H-T-H motif. NAD(+) is bound at residue Gly-91–Gly-96.

It belongs to the transcriptional regulatory Rex family. As to quaternary structure, homodimer.

It localises to the cytoplasm. Its function is as follows. Modulates transcription in response to changes in cellular NADH/NAD(+) redox state. This Streptococcus uberis (strain ATCC BAA-854 / 0140J) protein is Redox-sensing transcriptional repressor Rex.